A 127-amino-acid chain; its full sequence is Large ribosomal subunit protein bL19 (127 aa).

Belongs to the bacterial ribosomal protein bL19 family.

This protein is located at the 30S-50S ribosomal subunit interface and may play a role in the structure and function of the aminoacyl-tRNA binding site. The sequence is that of Large ribosomal subunit protein bL19 from Paraburkholderia phymatum (strain DSM 17167 / CIP 108236 / LMG 21445 / STM815) (Burkholderia phymatum).